A 606-amino-acid polypeptide reads, in one-letter code: Preterminal protein (606 aa).

Positions 320–329 (RLPVRRRRRR) match the Nuclear localization signal motif. An O-(5'-phospho-DNA)-serine modification is found at S515. Positions 573–606 (HLPLPERQADIPLPPLPAGPEPPLPPGARPRRRF) are disordered. The segment covering 584-600 (PLPPLPAGPEPPLPPGA) has biased composition (pro residues).

The protein belongs to the adenoviridae terminal protein family. In terms of assembly, heterodimer with the polymerase; this heterodimer binds to bp 9 to 18 of the genome. Interacts with host POU2F1; POU2F1 binds to the auxiliary sequences in the inverted terminal repeats and tethers the pTP-POL heterodimer to the origin DNA thereby participating in the assembly of the pre-initiation complex (POL-TP-DBP-NFIA-POU2F1). Preterminal protein is used to replicate viral genome, upon genomic encapsidation it is processed first into iTP and finally into TP by adenovirus protease.

Its subcellular location is the host nucleus matrix. Protein covalently bound to the viral DNA that acts as a primer for viral genomic replication by DNA strand displacement. Assembles on the viral origin of replication in an initiation complex with viral polymerase, DBP, host NFIA and host POU2F1/OCT1. During initiation, the polymerase covalently couples the first dCTP with Ser-580 of pTP. The terminal protein stimulates the template activity over 20 fold compared to protein-free templates. Neo-synthesized viral genomes are linked to two preterminal proteins, one for each 5' end. These new genomes are encapsidated in the nucleus, and during capsid maturation by viral protease, preterminal protein is first cleaved into intermediary (iTP), then into mature TP. May play a role in host nuclear matrix localization of genomic DNA. This Human adenovirus A serotype 12 (HAdV-12) protein is Preterminal protein.